Reading from the N-terminus, the 157-residue chain is Serine-protein kinase RsbW (157 aa).

This sequence belongs to the anti-sigma-factor family.

It catalyses the reaction L-seryl-[protein] + ATP = O-phospho-L-seryl-[protein] + ADP + H(+). The enzyme catalyses L-threonyl-[protein] + ATP = O-phospho-L-threonyl-[protein] + ADP + H(+). Its function is as follows. Negative regulator of sigma-B activity. Phosphorylates and inactivates its specific antagonist protein, RsbV. Upon phosphorylation of RsbV, RsbW is released and binds to sigma-B, thereby blocking its ability to form an RNA polymerase holoenzyme (E-sigma-B). This is Serine-protein kinase RsbW from Listeria monocytogenes serovar 1/2a (strain ATCC BAA-679 / EGD-e).